A 488-amino-acid polypeptide reads, in one-letter code: Probable Xaa-Pro aminopeptidase ATEG_00858 (488 aa).

Residues aspartate 273, aspartate 284, glutamate 417, and glutamate 456 each contribute to the Mn(2+) site.

The protein belongs to the peptidase M24B family. The cofactor is Mn(2+).

The enzyme catalyses Release of any N-terminal amino acid, including proline, that is linked to proline, even from a dipeptide or tripeptide.. Catalyzes the removal of a penultimate prolyl residue from the N-termini of peptides. This Aspergillus terreus (strain NIH 2624 / FGSC A1156) protein is Probable Xaa-Pro aminopeptidase ATEG_00858.